Reading from the N-terminus, the 666-residue chain is Endogenous retrovirus group K member 6 Gag polyprotein (666 aa).

The N-myristoyl glycine moiety is linked to residue G2. The interval 165–264 (GKGPELVGPS…APPSRQGSKL (100 aa)) is disordered. The segment covering 232 to 247 (GMPPAPQGRAPYPQPP) has biased composition (pro residues). 2 CCHC-type zinc fingers span residues 544-561 (RKCYNCGQIGHLKKNCPV) and 580-597 (DLCPRCKKGKHWASQCRS). A disordered region spans residues 598-642 (KFDKNGQPLSGNEQRGQPQAPQQTGAFPIQPFVPQGFQGQQPPLS). Residues 604–622 (QPLSGNEQRGQPQAPQQTG) are compositionally biased toward polar residues. Over residues 624–640 (FPIQPFVPQGFQGQQPP) the composition is skewed to low complexity.

It belongs to the beta type-B retroviral Gag protein family. HERV class-II K(HML-2) gag subfamily. Post-translationally, myristoylation is essential for retroviral assembly. Alteration of the glycine residue leads to a block in the budding of particles and an accumulation of Gag inside the cell. Specific enzymatic cleavages may yield mature proteins.

The protein localises to the cell membrane. Its function is as follows. The products of the Gag polyproteins of infectious retroviruses perform highly complex orchestrated tasks during the assembly, budding, maturation, and infection stages of the viral replication cycle. During viral assembly, the proteins form membrane associations and self-associations that ultimately result in budding of an immature virion from the infected cell. Gag precursors also function during viral assembly to selectively bind and package two plus strands of genomic RNA. Endogenous Gag proteins may have kept, lost or modified their original function during evolution. This Homo sapiens (Human) protein is Endogenous retrovirus group K member 6 Gag polyprotein (ERVK-6).